A 436-amino-acid chain; its full sequence is MANVVVIGAQWGDEGKGKITDLLSRSADVVVRYQGGVNAGHTIVVDDKVLKLHLIPSGILYKNTSCLIGSGTVVDPKILLKEIDMLIDNGIDISGLKISSTSHVTMPYHRILDEAMEADRGSNKIGTTGRGIGPTYADKSQRNGIRIRDLLNKERLSDVIEIPLREKNGLLEKIYGIKPLKLEDIVEEYLDYGERLSKHVVDCTRTIHAASKNKKNILFEGAQGTLLDLDHGTYPFVTSSNPISGGACIGAGVGPTLIDRVIGVAKAYTTRVGEGPFPTELQGSINDQLCDRGSEFGTTTGRRRRCGWFDGVIGKYAVSVNGLDCLAVTKLDVLDELDEIQVCIAYDLDGEKIDYFPTNSDELKKCKPIFKKLKGWQCSTADCRKLSDLPENAMNYLRFLAELMEVPIAIVSLGANRDQTIVIEDPIHGPKRALLR.

GTP contacts are provided by residues 12–18 and 40–42; these read GDEGKGK and GHT. The active-site Proton acceptor is the Asp-13. Positions 13 and 40 each coordinate Mg(2+). Residues 13–16, 38–41, Thr-128, Arg-142, Gln-223, Thr-238, and Arg-302 each bind IMP; these read DEGK and NAGH. The Proton donor role is filled by His-41. 298–304 contributes to the substrate binding site; it reads TTTGRRR. GTP contacts are provided by residues Arg-304, 330–332, and 412–414; these read KLD and SLG.

This sequence belongs to the adenylosuccinate synthetase family. In terms of assembly, homodimer. It depends on Mg(2+) as a cofactor.

The protein localises to the cytoplasm. It catalyses the reaction IMP + L-aspartate + GTP = N(6)-(1,2-dicarboxyethyl)-AMP + GDP + phosphate + 2 H(+). It functions in the pathway purine metabolism; AMP biosynthesis via de novo pathway; AMP from IMP: step 1/2. Functionally, plays an important role in the de novo pathway of purine nucleotide biosynthesis. Catalyzes the first committed step in the biosynthesis of AMP from IMP. This is Adenylosuccinate synthetase from Prochlorococcus marinus (strain MIT 9301).